The following is a 122-amino-acid chain: Large ribosomal subunit protein uL14 (122 aa).

Belongs to the universal ribosomal protein uL14 family. As to quaternary structure, part of the 50S ribosomal subunit. Forms a cluster with proteins L3 and L19. In the 70S ribosome, L14 and L19 interact and together make contacts with the 16S rRNA in bridges B5 and B8.

In terms of biological role, binds to 23S rRNA. Forms part of two intersubunit bridges in the 70S ribosome. In Corynebacterium diphtheriae (strain ATCC 700971 / NCTC 13129 / Biotype gravis), this protein is Large ribosomal subunit protein uL14.